A 617-amino-acid polypeptide reads, in one-letter code: Solute carrier family 2, facilitated glucose transporter member 12 (617 aa).

Residues 1–29 (MVPVENTEGPSLLNQKGTAVETEGSGSRH) form a disordered region. Residues 1 to 44 (MVPVENTEGPSLLNQKGTAVETEGSGSRHPPWARGCGMFTFLSS) are Cytoplasmic-facing. Positions 8 to 17 (EGPSLLNQKG) are enriched in polar residues. The helical transmembrane segment at 45–65 (VTAAVSGLLVGYELGIISGAL) threads the bilayer. The Extracellular portion of the chain corresponds to 66–80 (LQIKTLLALSCHEQE). Residues 81–101 (MVVSSLVIGALLASLTGGVLI) traverse the membrane as a helical segment. Residues 102 to 115 (DRYGRRTAIILSSC) lie on the Cytoplasmic side of the membrane. A helical membrane pass occupies residues 116–136 (LLGLGSLVLILSLSYTVLIVG). Position 137 (R137) is a topological domain, extracellular. The helical transmembrane segment at 138-158 (IAIGVSISLSSIATCVYIAEI) threads the bilayer. The Cytoplasmic portion of the chain corresponds to 159–172 (APQHRRGLLVSLNE). A helical membrane pass occupies residues 173–193 (LMIVIGILSAYISNYAFANVF). Over 194 to 197 (HGWK) the chain is Extracellular. Residues 198–218 (YMFGLVIPLGVLQAIAMYFLP) traverse the membrane as a helical segment. The Cytoplasmic portion of the chain corresponds to 219-278 (PSPRFLVMKGQEGAASKVLGRLRALSDTTEELTVIKSSLKDEYQYSFWDLFRSKDNMRTR). A helical transmembrane segment spans residues 279 to 299 (IMIGLTLVFFVQITGQPNILF). The Extracellular segment spans residues 300-317 (YASTVLKSVGFQSNEAAS). The helical transmembrane segment at 318 to 338 (LASTGVGVVKVISTIPATLLV) threads the bilayer. Over 339 to 345 (DHVGSKT) the chain is Cytoplasmic. The chain crosses the membrane as a helical span at residues 346–366 (FLCIGSSVMAASLVTMGIVNL). Over 367–466 (NIHMNFTHIC…PAFLKWLSLA (100 aa)) the chain is Extracellular. 4 N-linked (GlcNAc...) asparagine glycosylation sites follow: N371, N383, N396, and N401. A helical transmembrane segment spans residues 467–487 (SLLVYVAAFSIGLGPMPWLVL). Residues 488–498 (SEIFPGGIRGR) are Cytoplasmic-facing. Residues 499 to 519 (AMALTSSMNWGINLLISLTFL) traverse the membrane as a helical segment. Over 520–528 (TVTDLIGLP) the chain is Extracellular. Residues 529 to 549 (WVCFIYTIMSLASLLFVVMFI) form a helical membrane-spanning segment. Residues 550–617 (PETKGCSLEQ…GQSRQLSPET (68 aa)) lie on the Cytoplasmic side of the membrane.

The protein belongs to the major facilitator superfamily. Sugar transporter (TC 2.A.1.1) family. Glucose transporter subfamily. Predominantly expressed in skeletal muscle, heart and prostate, with lower levels in brain, placenta and kidney.

Its subcellular location is the cell membrane. It is found in the endomembrane system. The protein resides in the cytoplasm. The protein localises to the perinuclear region. It catalyses the reaction D-glucose(out) = D-glucose(in). Its function is as follows. Insulin-independent facilitative glucose transporter. This is Solute carrier family 2, facilitated glucose transporter member 12 from Homo sapiens (Human).